The primary structure comprises 507 residues: Protein DETOXIFICATION 41 (507 aa).

At 1–62 (MSSTETYEPL…KLLWTLSGAS (62 aa)) the chain is on the cytoplasmic side. Residues 63 to 83 (IVVSVLNYMLSFVTVMFTGHL) form a helical membrane-spanning segment. The Vacuolar portion of the chain corresponds to 84–92 (GSLQLAGAS). The helical transmembrane segment at 93-113 (IATVGIQGLAYGIMLGMASAV) threads the bilayer. Over 114–137 (QTVCGQAYGARQYSSMGIICQRAM) the chain is Cytoplasmic. The chain crosses the membrane as a helical span at residues 138–158 (VLHLAAAVFLTFLYWYSGPIL). The Vacuolar segment spans residues 159–170 (KTMGQSVAIAHE). Residues 171–191 (GQIFARGMIPQIYAFALACPM) form a helical membrane-spanning segment. The Cytoplasmic portion of the chain corresponds to 192 to 202 (QRFLQAQNIVN). A helical membrane pass occupies residues 203–223 (PLAYMSLGVFLLHTLLTWLVT). Residue asparagine 224 is a topological domain, vacuolar. Residues 225-245 (VLDFGLLGAALILSFSWWLLV) form a helical membrane-spanning segment. The Cytoplasmic segment spans residues 246 to 283 (AVNGMYILMSPNCKETWTGFSTRAFRGIWPYFKLTVAS). The chain crosses the membrane as a helical span at residues 284–304 (AVMLCLEIWYNQGLVIISGLL). Residues 305-312 (SNPTISLD) are Vacuolar-facing. The helical transmembrane segment at 313–333 (AISICMYYLNWDMQFMLGLSA) threads the bilayer. The Cytoplasmic portion of the chain corresponds to 334 to 355 (AISVRVSNELGAGNPRVAMLSV). The helical transmembrane segment at 356–376 (VVVNITTVLISSVLCVIVLVF) threads the bilayer. Residues 377–389 (RVGLSKAFTSDAE) lie on the Vacuolar side of the membrane. The chain crosses the membrane as a helical span at residues 390–410 (VIAAVSDLFPLLAVSIFLNGI). The Cytoplasmic segment spans residues 411–425 (QPILSGVAIGSGWQA). A helical membrane pass occupies residues 426–446 (VVAYVNLVTYYVIGLPIGCVL). The Vacuolar portion of the chain corresponds to 447–453 (GFKTSLG). Residues 454 to 474 (VAGIWWGMIAGVILQTLTLIV) traverse the membrane as a helical segment. Residues 475–507 (LTLKTNWTSEVENAAQRVKTSATENQEMANAGV) lie on the Cytoplasmic side of the membrane.

Belongs to the multi antimicrobial extrusion (MATE) (TC 2.A.66.1) family. In terms of tissue distribution, expressed in reproductive tissues, from buds to siliques. Restricted to the endothelium layer of the ovule and the seed coat.

The protein resides in the vacuole membrane. The protein operates within secondary metabolite biosynthesis; flavonoid biosynthesis. Functionally, acts as a flavonoid/H(+)-antiporter that control the vacuolar sequestration of flavonoids in the seed coat endothelium. Could transport the anthocyanin cyanidin-3-O-glucoside and epicatechin 3'-O-glucoside in vitro. The chain is Protein DETOXIFICATION 41 from Arabidopsis thaliana (Mouse-ear cress).